The primary structure comprises 347 residues: GMP reductase (347 aa).

108–131 provides a ligand contact to NADP(+); it reads DDFTKTRQILAMSTALRFICVDVA. 2 residues coordinate K(+): Gly181 and Gly183. The Thioimidate intermediate role is filled by Cys186. 216–239 is a binding site for NADP(+); sequence IVGDGGCTCPGDVAKAFGGGADFV.

The protein belongs to the IMPDH/GMPR family. GuaC type 1 subfamily. Homotetramer.

It catalyses the reaction IMP + NH4(+) + NADP(+) = GMP + NADPH + 2 H(+). In terms of biological role, catalyzes the irreversible NADPH-dependent deamination of GMP to IMP. It functions in the conversion of nucleobase, nucleoside and nucleotide derivatives of G to A nucleotides, and in maintaining the intracellular balance of A and G nucleotides. This is GMP reductase from Aeromonas salmonicida (strain A449).